A 308-amino-acid chain; its full sequence is MFNGEPGPASSGASRNVVRSSSISGEICGSQQAGGGAGTTTAKKRRSSLGAKMVAIVGLTQWSKSTLQLPQPEGATKKLRSNIRRSTETGIAVEMRSRVTRQGSRESTDGSTNSNSSDGTFIFPTTRLGAESQFSDFLDGLGPAQIVGRQTLATPPMGDVHIAIMDRSGQLEVEVIEARGLTPKPGSKSLPATYIKVYLLENGACLAKKKTKMTKKTCDPLYQQALLFDEGPQGKVLQVIVWGDYGRMDHKCFMGMAQIMLDELDLSAAVTGWYKLFPTSSVADSTLGSLTRRLSQSSLESATSPSCS.

A disordered region spans residues 86-120 (STETGIAVEMRSRVTRQGSRESTDGSTNSNSSDGT). Residues 109–120 (DGSTNSNSSDGT) show a composition bias toward low complexity. Residues 156–274 (PMGDVHIAIM…DLSAAVTGWY (119 aa)) form the C2 domain. 2 positions are modified to phosphoserine: Ser-295 and Ser-298.

In terms of assembly, binds PPFIA3. Does not bind RAB3.

The protein localises to the synapse. In terms of biological role, regulates synaptic membrane exocytosis. The polypeptide is Regulating synaptic membrane exocytosis protein 3 (RIMS3) (Homo sapiens (Human)).